Reading from the N-terminus, the 293-residue chain is Aromatic amino acid exporter YddG (293 aa).

Residues 1 to 6 lie on the Cytoplasmic side of the membrane; sequence MTSQKA. Residues 7 to 27 traverse the membrane as a helical segment; the sequence is TLIGLVAIVLWSTMVGLIRGV. An EamA 1 domain is found at 15–137; sequence VLWSTMVGLI…IALTGVCWVL (123 aa). The Periplasmic portion of the chain corresponds to 28–33; that stretch reads SEGLGP. The chain crosses the membrane as a helical span at residues 34–54; sequence VGGAAMIYSLSGLLLIFTVGL. Residues 55-63 lie on the Cytoplasmic side of the membrane; sequence PDIRRFPGR. Residues 64–84 traverse the membrane as a helical segment; sequence YLIAGSVLFVSYEICLALSLG. Residues 85–92 lie on the Periplasmic side of the membrane; that stretch reads YAATRHQA. Residues 93–113 form a helical membrane-spanning segment; that stretch reads IEVGMVNYLWPSLTILFAILF. The Cytoplasmic portion of the chain corresponds to 114–119; it reads NGQKTN. A helical transmembrane segment spans residues 120-140; the sequence is WLIVPGLLIALTGVCWVLGGE. Topologically, residues 141–147 are periplasmic; that stretch reads NGLNPGE. Residues 148 to 168 form a helical membrane-spanning segment; it reads IISNVATSPLSYLLAFLGAFI. In terms of domain architecture, EamA 2 spans 167–285; the sequence is FIWATYCTVT…AVMVCVGSLL (119 aa). At 169-182 the chain is on the cytoplasmic side; the sequence is WATYCTVTNKYARG. Residues 183–203 form a helical membrane-spanning segment; that stretch reads FNGITVFVLLTAVALWLHYFL. Residues 204–207 are Periplasmic-facing; the sequence is TPQP. A helical transmembrane segment spans residues 208–228; sequence AMIFSLPVIAKLFTAALTLGF. The Cytoplasmic segment spans residues 229 to 243; sequence AYAAWNVGILHGNVT. Residues 244–264 traverse the membrane as a helical segment; that stretch reads IMAVGSYFTPVMSSALAALLL. The Periplasmic segment spans residues 265-267; it reads SSP. A helical transmembrane segment spans residues 268-288; sequence LSFSFWQGAVMVCVGSLLCWL. At 289 to 293 the chain is on the cytoplasmic side; it reads ATRRR.

It belongs to the drug/metabolite transporter (DMT) superfamily. Aromatic amino acid/paraquat exporter (ArAA/P-E) (TC 2.A.7.17) family.

The protein resides in the cell inner membrane. Its function is as follows. Amino acid transporter with broad substrate specificity. Required for resistance to methyl viologen. May function with OmpD porin. This chain is Aromatic amino acid exporter YddG (yddG), found in Salmonella typhimurium (strain 14028s / SGSC 2262).